The sequence spans 1099 residues: MSLTEGAHTKWGVLKQKLGPQDPDQIEGNLENADPELCIRLLQIPSVVNYSGLKKRLESSDDEWMCQFLELSGLDLLLEALDRLSGRGVARIADALLQLTCINCVRTLMNSHKGIEYIVNNEGYVRKLSQALDTSNVMVKKQVFELLAALCIYSPEGHALCLDALEHYKVVKNQQYRFSVITNELSSSDNVPYMVTLLSVINAIIFGTEELRNRVQLRNEFIGLQLLDLLTKLRDLEDEDLLIQALVFEEAKSEDEEELLKIYGGINMNNHQEVFSTLFNKVSCSPLSVQLLSILQGLLQLDQSHPTSPLLWEALEVLVNRAVLLADDCQNNNVEEVMDRLVTSKKLSSKEKRKTDKCTNKVNKSIQTDKPKEESCEGKTVKKDPVSSGIPADSLQLLDALLAPPTKEDSPACITPLHTHLSGELTCSSVLPSPPSPLVPNADERISSSSSPLPPPPPPLPGTELSPPPPGMVALSLPPPPPPLPGMGGMLPPPPPPLPGMGGMLPTPPPPPLPGMGGMLPPPPPPLPGMGGMLPPPPPPLPGMGGMLPPPPPPLPGMGGMLPPPPPLPGMGGMLPPPPPPLPGMGGMPPPPPPMPGMGTFTDEVVVARVDYSLGYLPKAFLKVNKPTLKMKKLNWQKIPPNVIKDSHSMWASASSIEDTVEPNYSSIEQLFCLPQAAVKESAVPVKKPPKEITFLDSKKNLNLNIFLKQFKCPNKEVIELIEKGDRSRFDIEILKQFLKLLPEKHEVENLKSYQEDKAKLSNADQFYLLLLGVPCYQLRIECMLICEEINLMIDMIRPRAKVVSSACDDIISSHRLPLFCQLILKVGNFLNYGSHTGNANGFKISTLLKLTETRANQTRITLLHHILEEIEHNHTDLLQLPTDLENVSTVAGINIENMYTETSGNLKKLRDLQNKISTAATDVKEQYEKSIQDCMDTLKELEEQLTDISQKKVKLADYLCEDPTKLSLEETFSTMKAFRELFLKAKKDNKDRKEQAVKAEKRKQQIADEETKRQKGENGKIIRKGAAKLEEGCIIDDLLADIKKGFQLRKTAKTKTKADACPKTLSSETNRTDIQHVGKRPEVPPVHPQRKIIILKRQ.

A GBD/FH3 domain is found at 1–330 (MSLTEGAHTK…RAVLLADDCQ (330 aa)). 2 stretches are compositionally biased toward basic and acidic residues: residues 348-359 (SSKEKRKTDKCT) and 367-385 (QTDK…KKDP). Disordered stretches follow at residues 348-391 (SSKE…SGIP), 432-509 (PSPP…PTPP), and 1000-1019 (AEKR…KGEN). Positions 426–569 (TCSSVLPSPP…GMLPPPPPLP (144 aa)) constitute an FH1 domain. The segment covering 452–499 (PLPPPPPPLPGTELSPPPPGMVALSLPPPPPPLPGMGGMLPPPPPPLP) has biased composition (pro residues). The FH2 domain maps to 621–1009 (FLKVNKPTLK…AEKRKQQIAD (389 aa)). The stretch at 907 to 1019 (LKKLRDLQNK…EETKRQKGEN (113 aa)) forms a coiled coil. A WH2 domain is found at 1037–1052 (DDLLADIKKGFQLRKT). The interval 1064–1085 (KTLSSETNRTDIQHVGKRPEVP) is disordered. Residues 1071-1083 (NRTDIQHVGKRPE) are compositionally biased toward basic and acidic residues.

Belongs to the formin homology family.

In Xenopus laevis (African clawed frog), this protein is Inverted formin-2 (inf2).